Reading from the N-terminus, the 557-residue chain is Small ribosomal subunit protein bS1 (557 aa).

S1 motif domains lie at 21 to 87, 105 to 171, 192 to 260, and 277 to 347; these read GSIV…LSRE, AETV…VSRR, GMEV…LGLK, and GTKL…LGLK. N6-acetyllysine is present on residues K229, K279, and K363. 2 S1 motif domains span residues 364 to 434 and 451 to 520; these read GDRV…LGVK and GAIV…LSVR.

This sequence belongs to the bacterial ribosomal protein bS1 family. As to quaternary structure, part of the 30S ribosomal subunit. Some nascent polypeptide chains are able to cross-link to this protein in situ. Can be cross-linked to mRNA in the ribosome. In terms of processing, phosphorylated; probably on a serine.

Its function is as follows. Required for translation of most natural mRNAs except for leaderless mRNA. Binds mRNA upstream of the Shine-Dalgarno (SD) sequence and helps it bind to the 30S ribosomal subunit; acts as an RNA chaperone to unfold structured mRNA on the ribosome but is not essential for mRNAs with strong SDs and little 5'-UTR structure, thus it may help fine-tune which mRNAs that are translated. Unwinds dsRNA by binding to transiently formed ssRNA regions; binds about 10 nucleotides. Has a preference for polypyrimidine tracts. Negatively autoregulates its own translation. The polypeptide is Small ribosomal subunit protein bS1 (rpsA) (Escherichia coli O157:H7).